Here is an 89-residue protein sequence, read N- to C-terminus: UPF0147 protein TV0625 (89 aa).

It belongs to the UPF0147 family.

The protein is UPF0147 protein TV0625 of Thermoplasma volcanium (strain ATCC 51530 / DSM 4299 / JCM 9571 / NBRC 15438 / GSS1).